A 630-amino-acid polypeptide reads, in one-letter code: Polygalacturonase-1 non-catalytic subunit beta (630 aa).

A signal peptide spans 1–27 (MHTKIHLPPCILLLLLFSLPSFNVVVG). Residues 28-108 (GDGESGNPFT…MCAPDLSPSL (81 aa)) constitute a propeptide that is removed on maturation. N124, N142, N256, N334, N369, and N387 each carry an N-linked (GlcNAc...) asparagine glycan. Positions 398–630 (EVNGGKKVNN…ENDMTWAIAD (233 aa)) are excised as a propeptide. The BURP domain maps to 415 to 629 (FFREKMLKSG…FENDMTWAIA (215 aa)).

As to quaternary structure, interacts with polygalacturonase-2 (isoenzymes PG2A and PG2B) to form heterodimers called polygalacturonase-1 (PG1). As to expression, mostly expressed in fruit pericarp. Also detected at low levels in cell wall of roots, leaves and flowers (at protein level).

The protein resides in the secreted. The protein localises to the extracellular space. Its subcellular location is the apoplast. It localises to the cell wall. Its function is as follows. Non-catalytic subunit of the polygalacturonase isozyme 1 (PG1). Necessary and sufficient to convert the polygalacturonase from its monomeric form PG2 to its heterodimeric form PG1. Seems to limit the depolymerization and solubilization of cell wall polyuronides mediated by PG2 during ripening, probably by recruiting PG2 to form PG1. This chain is Polygalacturonase-1 non-catalytic subunit beta (GP1), found in Solanum lycopersicum (Tomato).